Reading from the N-terminus, the 146-residue chain is Large ribosomal subunit protein uL11 (146 aa).

It belongs to the universal ribosomal protein uL11 family. In terms of assembly, part of the ribosomal stalk of the 50S ribosomal subunit. Interacts with L10 and the large rRNA to form the base of the stalk. L10 forms an elongated spine to which L12 dimers bind in a sequential fashion forming a multimeric L10(L12)X complex. One or more lysine residues are methylated.

In terms of biological role, forms part of the ribosomal stalk which helps the ribosome interact with GTP-bound translation factors. The chain is Large ribosomal subunit protein uL11 from Salinibacter ruber (strain DSM 13855 / M31).